We begin with the raw amino-acid sequence, 208 residues long: MELKVLTTAGTESGEVVTLRDDIFGAEVSEHAVYLDVKSILANRRQGTHKSKTRAEVRGGGRKPYRQKGTGNARQGSTRSPLMVGGGTIFGPTPHGYDQKVNKKVKALARRSAFSSKAQDGRILVVEDFKLDEIKTKPFAAILKNLGLDEKKTLMLTPEYNVIITRSGKNIQTVNIMSAEKASTYDILNSHTVLFQKAALKKIEETLG.

Residues 45–96 (RQGTHKSKTRAEVRGGGRKPYRQKGTGNARQGSTRSPLMVGGGTIFGPTPHG) form a disordered region. Polar residues predominate over residues 69–80 (GTGNARQGSTRS).

The protein belongs to the universal ribosomal protein uL4 family. In terms of assembly, part of the 50S ribosomal subunit.

In terms of biological role, one of the primary rRNA binding proteins, this protein initially binds near the 5'-end of the 23S rRNA. It is important during the early stages of 50S assembly. It makes multiple contacts with different domains of the 23S rRNA in the assembled 50S subunit and ribosome. Forms part of the polypeptide exit tunnel. The protein is Large ribosomal subunit protein uL4 of Chlorobium phaeovibrioides (strain DSM 265 / 1930) (Prosthecochloris vibrioformis (strain DSM 265)).